A 354-amino-acid polypeptide reads, in one-letter code: Probable serine acetyltransferase 2 (354 aa).

Belongs to the transferase hexapeptide repeat family. In terms of assembly, homomultimer.

The catalysed reaction is L-serine + acetyl-CoA = O-acetyl-L-serine + CoA. It participates in amino-acid biosynthesis; L-cysteine biosynthesis; L-cysteine from L-serine: step 1/2. In Oryza sativa subsp. japonica (Rice), this protein is Probable serine acetyltransferase 2 (SAT2).